We begin with the raw amino-acid sequence, 186 residues long: Protein Syd (186 aa).

Belongs to the Syd family.

The protein localises to the cell inner membrane. Functionally, interacts with the SecY protein in vivo. May bind preferentially to an uncomplexed state of SecY, thus functioning either as a chelating agent for excess SecY in the cell or as a regulatory factor that negatively controls the translocase function. This is Protein Syd from Pseudoalteromonas atlantica (strain T6c / ATCC BAA-1087).